Reading from the N-terminus, the 449-residue chain is Phosphoglucosamine mutase (449 aa).

Catalysis depends on Ser-101, which acts as the Phosphoserine intermediate. Positions 101, 242, 244, and 246 each coordinate Mg(2+). Ser-101 carries the phosphoserine modification.

It belongs to the phosphohexose mutase family. Mg(2+) is required as a cofactor. Post-translationally, activated by phosphorylation.

It catalyses the reaction alpha-D-glucosamine 1-phosphate = D-glucosamine 6-phosphate. In terms of biological role, catalyzes the conversion of glucosamine-6-phosphate to glucosamine-1-phosphate. This is Phosphoglucosamine mutase from Bradyrhizobium sp. (strain BTAi1 / ATCC BAA-1182).